The following is a 425-amino-acid chain: Proteinase-activated receptor 1 (425 aa).

The signal sequence occupies residues 1–21; the sequence is MGPRRLLLVAACFSLCGPLLS. The propeptide occupies 22 to 41; sequence ARTRARRPESKATNATLDPR. N-linked (GlcNAc...) asparagine glycosylation is found at Asn-35, Asn-62, and Asn-75. The Extracellular segment spans residues 42-102; the sequence is SFLLRNPNDK…SGYLTSSWLT (61 aa). The helical transmembrane segment at 103 to 128 threads the bilayer; that stretch reads LFVPSVYTGVFVVSLPLNIMAIVVFI. Residues 129–137 are Cytoplasmic-facing; that stretch reads LKMKVKKPA. Residues 138 to 157 traverse the membrane as a helical segment; the sequence is VVYMLHLATADVLFVSVLPF. The Extracellular portion of the chain corresponds to 158–176; sequence KISYYFSGSDWQFGSELCR. Cysteines 175 and 254 form a disulfide. Residues 177–198 form a helical membrane-spanning segment; the sequence is FVTAAFYCNMYASILLMTVISI. The Cytoplasmic portion of the chain corresponds to 199–218; the sequence is DRFLAVVYPMQSLSWRTLGR. A helical transmembrane segment spans residues 219–239; the sequence is ASFTCLAIWALAIAGVVPLLL. Over 240–268 the chain is Extracellular; sequence KEQTIQVPGLNITTCHDVLNETLLEGYYA. Residues Asn-250 and Asn-259 are each glycosylated (N-linked (GlcNAc...) asparagine). The chain crosses the membrane as a helical span at residues 269–288; sequence YYFSAFSAVFFFVPLIISTV. The Cytoplasmic portion of the chain corresponds to 289–311; that stretch reads CYVSIIRCLSSSAVANRSKKSRA. A helical membrane pass occupies residues 312 to 334; the sequence is LFLSAAVFCIFIICFGPTNVLLI. Topologically, residues 335–350 are extracellular; it reads AHYSFLSHTSTTEAAY. A helical membrane pass occupies residues 351 to 374; that stretch reads FAYLLCVCVSSISCCIDPLIYYYA. Residues 375–425 are Cytoplasmic-facing; sequence SSECQRYVYSILCCKESSDPSSYNSSGQLMASKMDTCSSNLNNSIYKKLLT. Phosphoserine is present on Ser-418.

The protein belongs to the G-protein coupled receptor 1 family. Post-translationally, proteolytic cleavage by thrombin generates a new N-terminus that functions as a tethered ligand. Also proteolytically cleaved by cathepsin CTSG. Cleavage at 41-Arg-|-Ser-42 by CTSG results in receptor activation while cleavage at 55-Phe-|-Trp-56 results in inhibition of receptor activation. Phosphorylated in the C-terminal tail; probably mediating desensitization prior to the uncoupling and internalization of the receptor. In terms of tissue distribution, platelets and vascular endothelial cells.

It localises to the cell membrane. In terms of biological role, high affinity receptor that binds the activated thrombin, leading to calcium release from intracellular stores. The thrombin-activated receptor signaling pathway is mediated through PTX-insensitive G proteins, activation of phospholipase C resulting in the production of 1D-myo-inositol 1,4,5-trisphosphate (InsP3) which binds to InsP3 receptors causing calcium release from the stores. In astrocytes, the calcium released into the cytosol allows the Ca(2+)-dependent release of L-glutamate into the synaptic cleft through BEST1, that targets the neuronal postsynaptic GRIN2A/NMDAR receptor resulting in the synaptic plasticity regulation. May play a role in platelets activation and in vascular development. Mediates up-regulation of pro-inflammatory cytokines, such as MCP-1/CCL2 and IL6, triggered by coagulation factor Xa (F10) in cardiac fibroblasts and umbilical vein endothelial cells. The protein is Proteinase-activated receptor 1 of Homo sapiens (Human).